We begin with the raw amino-acid sequence, 966 residues long: Leucine--tRNA ligase (966 aa).

A 'HIGH' region motif is present at residues 41 to 51; it reads PYLNGNLHAGH. A 'KMSKS' region motif is present at residues 632–636; that stretch reads KMSKS. Lys635 contributes to the ATP binding site.

The protein belongs to the class-I aminoacyl-tRNA synthetase family.

The protein localises to the cytoplasm. The catalysed reaction is tRNA(Leu) + L-leucine + ATP = L-leucyl-tRNA(Leu) + AMP + diphosphate. This chain is Leucine--tRNA ligase, found in Methanosarcina mazei (strain ATCC BAA-159 / DSM 3647 / Goe1 / Go1 / JCM 11833 / OCM 88) (Methanosarcina frisia).